Reading from the N-terminus, the 166-residue chain is Ribosome maturation factor RimM (166 aa).

Residues 94–166 (EGEYYLGKLI…IELKVLDLLK (73 aa)) enclose the PRC barrel domain.

The protein belongs to the RimM family. Binds ribosomal protein uS19.

It is found in the cytoplasm. In terms of biological role, an accessory protein needed during the final step in the assembly of 30S ribosomal subunit, possibly for assembly of the head region. Essential for efficient processing of 16S rRNA. May be needed both before and after RbfA during the maturation of 16S rRNA. It has affinity for free ribosomal 30S subunits but not for 70S ribosomes. The sequence is that of Ribosome maturation factor RimM from Borreliella burgdorferi (strain ATCC 35210 / DSM 4680 / CIP 102532 / B31) (Borrelia burgdorferi).